The sequence spans 473 residues: MNIKKFAKQATVLTFTTALLAGGATQAFAKETNQKPYKETYGISHITRHDMLQIPEQQKNEKYQVPEFDSSTIKNISSAKGLDVWDSWPLQNADGTVANYHGYHIVFALAGDPKNADDTSIYMFYQKVGETSIDSWKNAGRVFKDSDKFDANDSILKDQTQEWSGSATFTSDGKIRLFYTDFSGKHYGKQTLTTAQVNVSASDSSLNINGVEDYKSIFDGDGKTYQNVQQFIDEGNYSSGDNHTLRDPHYVEDKGHKYLVFEANTGTEDGYQGEESLFNKAYYGKSTSFFRQESQKLLQSDKKRTAELANGALGMIELNDDYTLKKVMKPLIASNTVTDEIERANVFKMNGKWYLFTDSRGSKMTIDGITSNDIYMLGYVSNSLTGPYKPLNKTGLVLKMDLDPNDVTFTYSHFAVPQAKGNNVVITSYMTNRGFYADKQSTFAPSFLLNIKGKKTSVVKDSILEQGQLTVNK.

Residues 1 to 29 (MNIKKFAKQATVLTFTTALLAGGATQAFA) form the signal peptide. 3 residues coordinate sucrose: W85, D86, and S164. The active-site Nucleophile is the D86. Residue D241 participates in Ca(2+) binding. Sucrose is bound by residues R246 and D247. Residues Q272, L308, N310, and D339 each contribute to the Ca(2+) site. E340 is a binding site for sucrose. E342 acts as the Proton donor/acceptor in catalysis. R360 contacts sucrose.

It belongs to the glycosyl hydrolase 68 family. Monomer.

It is found in the secreted. The enzyme catalyses [6)-beta-D-fructofuranosyl-(2-&gt;](n) alpha-D-glucopyranoside + sucrose = [6)-beta-D-fructofuranosyl-(2-&gt;](n+1) alpha-D-glucopyranoside + D-glucose. With respect to regulation, ca(2+) may play an important structural role and promote stability of levansucrase. The enzyme concentration is a factor defining the molecular weight (MW) levan distribution. A bimodal distribution is reported at the usual enzyme concentrations. At low concentrations, the enzyme synthesizes high MW levan, and at high concentrations, it synthesizes low MW levan. In terms of biological role, catalyzes the synthesis of levan, a fructose polymer, by transferring the fructosyl moiety from sucrose to a growing acceptor molecule. Also displays sucrose hydrolase activity. At low sucrose concentrations, functions as an hydrolase with water as acceptor, whereas at higher substrate concentrations it adds fructosyl units to a growing levan chain. The sequence is that of Levansucrase from Bacillus subtilis (strain 168).